Here is a 204-residue protein sequence, read N- to C-terminus: Leucyl/phenylalanyl-tRNA--protein transferase (204 aa).

The protein belongs to the L/F-transferase family.

The protein localises to the cytoplasm. The catalysed reaction is N-terminal L-lysyl-[protein] + L-leucyl-tRNA(Leu) = N-terminal L-leucyl-L-lysyl-[protein] + tRNA(Leu) + H(+). It carries out the reaction N-terminal L-arginyl-[protein] + L-leucyl-tRNA(Leu) = N-terminal L-leucyl-L-arginyl-[protein] + tRNA(Leu) + H(+). The enzyme catalyses L-phenylalanyl-tRNA(Phe) + an N-terminal L-alpha-aminoacyl-[protein] = an N-terminal L-phenylalanyl-L-alpha-aminoacyl-[protein] + tRNA(Phe). Its function is as follows. Functions in the N-end rule pathway of protein degradation where it conjugates Leu, Phe and, less efficiently, Met from aminoacyl-tRNAs to the N-termini of proteins containing an N-terminal arginine or lysine. The sequence is that of Leucyl/phenylalanyl-tRNA--protein transferase from Brucella abortus (strain 2308).